Here is a 177-residue protein sequence, read N- to C-terminus: Interleukin-1 receptor antagonist protein (177 aa).

A signal peptide spans 1-25 (MEVSRYLCSYLISFLLFLFHSETAC). Cys91 and Cys141 are oxidised to a cystine. An N-linked (GlcNAc...) asparagine glycan is attached at Asn109.

This sequence belongs to the IL-1 family.

It is found in the secreted. In terms of biological role, anti-inflammatory antagonist of interleukin-1 family of proinflammatory cytokines such as interleukin-1beta/IL1B and interleukin-1alpha/IL1A. Protects from immune dysregulation and uncontrolled systemic inflammation triggered by IL1 for a range of innate stimulatory agents such as pathogens. The polypeptide is Interleukin-1 receptor antagonist protein (IL1RN) (Sus scrofa (Pig)).